The following is a 191-amino-acid chain: Peptidyl-tRNA hydrolase (191 aa).

Residue Y17 coordinates tRNA. H22 functions as the Proton acceptor in the catalytic mechanism. TRNA-binding residues include Y68, N70, and N116.

Belongs to the PTH family. As to quaternary structure, monomer.

It localises to the cytoplasm. It carries out the reaction an N-acyl-L-alpha-aminoacyl-tRNA + H2O = an N-acyl-L-amino acid + a tRNA + H(+). Functionally, hydrolyzes ribosome-free peptidyl-tRNAs (with 1 or more amino acids incorporated), which drop off the ribosome during protein synthesis, or as a result of ribosome stalling. Catalyzes the release of premature peptidyl moieties from peptidyl-tRNA molecules trapped in stalled 50S ribosomal subunits, and thus maintains levels of free tRNAs and 50S ribosomes. The chain is Peptidyl-tRNA hydrolase from Mycolicibacterium smegmatis (strain ATCC 700084 / mc(2)155) (Mycobacterium smegmatis).